Here is a 323-residue protein sequence, read N- to C-terminus: tRNA U34 carboxymethyltransferase (323 aa).

Carboxy-S-adenosyl-L-methionine contacts are provided by residues Lys-91, Trp-105, Lys-110, Gly-130, 152 to 154 (DPT), 181 to 182 (IE), Met-196, Tyr-200, and Arg-315.

The protein belongs to the class I-like SAM-binding methyltransferase superfamily. CmoB family. In terms of assembly, homotetramer.

It catalyses the reaction carboxy-S-adenosyl-L-methionine + 5-hydroxyuridine(34) in tRNA = 5-carboxymethoxyuridine(34) in tRNA + S-adenosyl-L-homocysteine + H(+). Catalyzes carboxymethyl transfer from carboxy-S-adenosyl-L-methionine (Cx-SAM) to 5-hydroxyuridine (ho5U) to form 5-carboxymethoxyuridine (cmo5U) at position 34 in tRNAs. This Salmonella typhimurium (strain LT2 / SGSC1412 / ATCC 700720) protein is tRNA U34 carboxymethyltransferase.